Reading from the N-terminus, the 99-residue chain is Co-chaperonin GroES (99 aa).

The protein belongs to the GroES chaperonin family. In terms of assembly, heptamer of 7 subunits arranged in a ring. Interacts with the chaperonin GroEL.

It localises to the cytoplasm. Together with the chaperonin GroEL, plays an essential role in assisting protein folding. The GroEL-GroES system forms a nano-cage that allows encapsulation of the non-native substrate proteins and provides a physical environment optimized to promote and accelerate protein folding. GroES binds to the apical surface of the GroEL ring, thereby capping the opening of the GroEL channel. The protein is Co-chaperonin GroES of Corynebacterium efficiens (strain DSM 44549 / YS-314 / AJ 12310 / JCM 11189 / NBRC 100395).